Here is a 212-residue protein sequence, read N- to C-terminus: ATP-dependent Clp protease proteolytic subunit 2 (212 aa).

Residues 1-20 are disordered; the sequence is MSHNTSIASQGMPAMAGPET. Serine 107 serves as the catalytic Nucleophile. Histidine 132 is a catalytic residue.

This sequence belongs to the peptidase S14 family. Fourteen ClpP subunits assemble into 2 heptameric rings which stack back to back to give a disk-like structure with a central cavity, resembling the structure of eukaryotic proteasomes.

The protein localises to the cytoplasm. It catalyses the reaction Hydrolysis of proteins to small peptides in the presence of ATP and magnesium. alpha-casein is the usual test substrate. In the absence of ATP, only oligopeptides shorter than five residues are hydrolyzed (such as succinyl-Leu-Tyr-|-NHMec, and Leu-Tyr-Leu-|-Tyr-Trp, in which cleavage of the -Tyr-|-Leu- and -Tyr-|-Trp bonds also occurs).. Cleaves peptides in various proteins in a process that requires ATP hydrolysis. Has a chymotrypsin-like activity. Plays a major role in the degradation of misfolded proteins. The chain is ATP-dependent Clp protease proteolytic subunit 2 from Cutibacterium acnes (strain DSM 16379 / KPA171202) (Propionibacterium acnes).